The primary structure comprises 601 residues: Elongation factor 4 (601 aa).

Residues 6-188 (NRIRNFCIIA…QVVTKIAPPK (183 aa)) enclose the tr-type G domain. Residues 18–23 (DHGKST) and 135–138 (NKID) contribute to the GTP site.

It belongs to the TRAFAC class translation factor GTPase superfamily. Classic translation factor GTPase family. LepA subfamily.

It is found in the cell membrane. It catalyses the reaction GTP + H2O = GDP + phosphate + H(+). In terms of biological role, required for accurate and efficient protein synthesis under certain stress conditions. May act as a fidelity factor of the translation reaction, by catalyzing a one-codon backward translocation of tRNAs on improperly translocated ribosomes. Back-translocation proceeds from a post-translocation (POST) complex to a pre-translocation (PRE) complex, thus giving elongation factor G a second chance to translocate the tRNAs correctly. Binds to ribosomes in a GTP-dependent manner. This Desulforamulus reducens (strain ATCC BAA-1160 / DSM 100696 / MI-1) (Desulfotomaculum reducens) protein is Elongation factor 4.